Reading from the N-terminus, the 172-residue chain is Stellate protein CG33237 (172 aa).

The protein belongs to the casein kinase 2 subunit beta family. Interacts in vitro with the casein kinase 2 alpha subunit (CkII-alpha). The relevance of such interaction is however unclear in vivo. In terms of tissue distribution, probably not expressed in wild-type flies. In males lacking the Y chromosome, it is testis-specific and constitutes the main component of star-shaped crystals.

Functionally, unknown. In males lacking the Y chromosome, its strong overexpression leads to the appearance of proteinaceous star-shaped crystals in the primary spermatocytes causing meiotic drive, possibly by interfering with normal casein kinase 2 activity. The polypeptide is Stellate protein CG33237 (Ste:CG33237) (Drosophila melanogaster (Fruit fly)).